Consider the following 257-residue polypeptide: Imidazole glycerol phosphate synthase subunit HisF (257 aa).

Catalysis depends on residues D11 and D130.

It belongs to the HisA/HisF family. In terms of assembly, heterodimer of HisH and HisF.

It is found in the cytoplasm. The enzyme catalyses 5-[(5-phospho-1-deoxy-D-ribulos-1-ylimino)methylamino]-1-(5-phospho-beta-D-ribosyl)imidazole-4-carboxamide + L-glutamine = D-erythro-1-(imidazol-4-yl)glycerol 3-phosphate + 5-amino-1-(5-phospho-beta-D-ribosyl)imidazole-4-carboxamide + L-glutamate + H(+). It participates in amino-acid biosynthesis; L-histidine biosynthesis; L-histidine from 5-phospho-alpha-D-ribose 1-diphosphate: step 5/9. Its function is as follows. IGPS catalyzes the conversion of PRFAR and glutamine to IGP, AICAR and glutamate. The HisF subunit catalyzes the cyclization activity that produces IGP and AICAR from PRFAR using the ammonia provided by the HisH subunit. This Shewanella baltica (strain OS223) protein is Imidazole glycerol phosphate synthase subunit HisF.